Consider the following 63-residue polypeptide: Large ribosomal subunit protein bL35 (63 aa).

It belongs to the bacterial ribosomal protein bL35 family.

The chain is Large ribosomal subunit protein bL35 from Campylobacter curvus (strain 525.92).